A 571-amino-acid chain; its full sequence is Proline--tRNA ligase (571 aa).

The protein belongs to the class-II aminoacyl-tRNA synthetase family. ProS type 1 subfamily. As to quaternary structure, homodimer.

The protein resides in the cytoplasm. It carries out the reaction tRNA(Pro) + L-proline + ATP = L-prolyl-tRNA(Pro) + AMP + diphosphate. In terms of biological role, catalyzes the attachment of proline to tRNA(Pro) in a two-step reaction: proline is first activated by ATP to form Pro-AMP and then transferred to the acceptor end of tRNA(Pro). As ProRS can inadvertently accommodate and process non-cognate amino acids such as alanine and cysteine, to avoid such errors it has two additional distinct editing activities against alanine. One activity is designated as 'pretransfer' editing and involves the tRNA(Pro)-independent hydrolysis of activated Ala-AMP. The other activity is designated 'posttransfer' editing and involves deacylation of mischarged Ala-tRNA(Pro). The misacylated Cys-tRNA(Pro) is not edited by ProRS. This is Proline--tRNA ligase from Aliivibrio salmonicida (strain LFI1238) (Vibrio salmonicida (strain LFI1238)).